The following is a 684-amino-acid chain: MYDEPSDIVRLVSTVIVSESEHIPVLAIIDFFFSLLSSASTKREAQSYLSRFKAEKPEPAKSPPEQSAMGYPSTNFVQSGVNLGGGMFGMAGVIDNHAMFRQESALGKSLPIETVSEETLHIALVKIREPQLLNDQTLGEVGRTLSQLSLLGMSCCVVIDPGLPQSDTFWRNRSIKQADRMLAAIEKNGVDSRRLDDVIRLAPSPKHALSVVSRELILSPLRRGKIAVIPPIGYTEGTLRAVPVLADDVVLALTREFTGLGVKARPEDNPHELARRISKLQKEVSVDRLIILDPAGGIPSLKRASKSHVFVNLEQEFEEITNELREGMAAGDSLVTGDKNENGQQILSLEKSNPLSTVVEREGAASLPSELQVTSSDRSSVHIPDFERHLDNLTLLHNALTYLPPASSGIISIPQDATNSASEPRDPSQLSTVATRRKRNPLIHNLLTDKPSHSASLPAGRLRANNGCSSQNNFQVMHSTFVKKGMPLTLFPDPRVHIWKPPINGKSRMTLNDPHIDLPRLVQLIEDSFNRKLDVQHYLNRVSDRLAGLIIAGEYEGGAVLTWELPPGVPNDGSEESRSRMVPYLDKFTVLKRSQGAGGVADIVFNAMVRTCLPKGVCWRSRRDNPVNKWYFERARGTWKLPGSNWTMFWTTDGVLEGDRLFRDYEGVCRGIEPSWLDNKHVVD.

Residues 414 to 439 (PQDATNSASEPRDPSQLSTVATRRKR) are disordered. The span at 415 to 434 (QDATNSASEPRDPSQLSTVA) shows a compositional bias: polar residues. Residues 505-674 (GKSRMTLNDP…YEGVCRGIEP (170 aa)) enclose the N-acetyltransferase domain.

This sequence belongs to the acetyltransferase family.

The protein resides in the mitochondrion. It carries out the reaction L-glutamate + acetyl-CoA = N-acetyl-L-glutamate + CoA + H(+). It functions in the pathway amino-acid biosynthesis; L-arginine biosynthesis; N(2)-acetyl-L-ornithine from L-glutamate: step 1/4. Functionally, N-acetylglutamate synthase involved in arginine biosynthesis. The polypeptide is Amino-acid acetyltransferase, mitochondrial (ARG2) (Ajellomyces capsulatus (strain NAm1 / WU24) (Darling's disease fungus)).